The following is a 125-amino-acid chain: Ribosome-binding factor A (125 aa).

It belongs to the RbfA family. As to quaternary structure, monomer. Binds 30S ribosomal subunits, but not 50S ribosomal subunits or 70S ribosomes.

The protein resides in the cytoplasm. Functionally, one of several proteins that assist in the late maturation steps of the functional core of the 30S ribosomal subunit. Associates with free 30S ribosomal subunits (but not with 30S subunits that are part of 70S ribosomes or polysomes). Required for efficient processing of 16S rRNA. May interact with the 5'-terminal helix region of 16S rRNA. The protein is Ribosome-binding factor A of Wigglesworthia glossinidia brevipalpis.